We begin with the raw amino-acid sequence, 1360 residues long: DNA-directed RNA polymerase subunit beta (1360 aa).

Belongs to the RNA polymerase beta chain family. In terms of assembly, the RNAP catalytic core consists of 2 alpha, 1 beta, 1 beta' and 1 omega subunit. When a sigma factor is associated with the core the holoenzyme is formed, which can initiate transcription.

It catalyses the reaction RNA(n) + a ribonucleoside 5'-triphosphate = RNA(n+1) + diphosphate. Its function is as follows. DNA-dependent RNA polymerase catalyzes the transcription of DNA into RNA using the four ribonucleoside triphosphates as substrates. This is DNA-directed RNA polymerase subunit beta from Desulfotalea psychrophila (strain LSv54 / DSM 12343).